The primary structure comprises 347 residues: Protein RecA (347 aa).

An ATP-binding site is contributed by 64–71 (GPESSGKT).

This sequence belongs to the RecA family.

The protein resides in the cytoplasm. Functionally, can catalyze the hydrolysis of ATP in the presence of single-stranded DNA, the ATP-dependent uptake of single-stranded DNA by duplex DNA, and the ATP-dependent hybridization of homologous single-stranded DNAs. It interacts with LexA causing its activation and leading to its autocatalytic cleavage. This chain is Protein RecA, found in Bartonella tribocorum (strain CIP 105476 / IBS 506).